Here is a 236-residue protein sequence, read N- to C-terminus: Small ribosomal subunit protein uS2c (236 aa).

It belongs to the universal ribosomal protein uS2 family.

The protein resides in the plastid. It is found in the chloroplast. In Lolium perenne (Perennial ryegrass), this protein is Small ribosomal subunit protein uS2c (rps2).